A 361-amino-acid chain; its full sequence is Diacylglycerol O-acyltransferase 2 (361 aa).

Topologically, residues 1–42 (MKTLIAAYSGVLRGTGSSILSALQDLFSVTWLNRAKVEKQLQ) are cytoplasmic. Residues 43–61 (VISVLQWVLSFLVLGVACS) form a helical membrane-spanning segment. Topologically, residues 62 to 65 (VILM) are lumenal. Residues 66–85 (YTFCTDCWLIAVLYFTWLVF) traverse the membrane as a helical segment. Over 86–361 (DWNTPKKGGR…LPETEVLEVN (276 aa)) the chain is Cytoplasmic.

The protein belongs to the diacylglycerol acyltransferase family. In terms of assembly, forms multimeric complexes consisting of several DGAT2 subunits. Interacts with SLC27A1 and this interaction is enhanced in the presence of ZFYVE1.

The protein resides in the endoplasmic reticulum membrane. It is found in the lipid droplet. The protein localises to the cytoplasm. Its subcellular location is the perinuclear region. The enzyme catalyses an acyl-CoA + a 1,2-diacyl-sn-glycerol = a triacyl-sn-glycerol + CoA. It catalyses the reaction all-trans-retinol + an acyl-CoA = an all-trans-retinyl ester + CoA. The catalysed reaction is 2-(9Z-octadecenoyl)-glycerol + (9Z)-octadecenoyl-CoA = 1,2-di-(9Z-octadecenoyl)-sn-glycerol + CoA. It carries out the reaction 1,2-di-(9Z-octadecenoyl)-sn-glycerol + (9Z)-octadecenoyl-CoA = 1,2,3-tri-(9Z-octadecenoyl)-glycerol + CoA. The enzyme catalyses all-trans-retinol + hexadecanoyl-CoA = all-trans-retinyl hexadecanoate + CoA. It catalyses the reaction 1-O-(9Z-octadecenyl)-glycerol + (9Z)-octadecenoyl-CoA = 1-O-(9Z-octadecyl)-3-(9Z-octadecenoyl)-glycerol + CoA. The catalysed reaction is 1-(9Z-octadecenoyl)-glycerol + (9Z)-octadecenoyl-CoA = 1,2-di-(9Z-octadecenoyl)-glycerol + CoA. It carries out the reaction 1,2-di-(9Z-octadecenoyl)-sn-glycerol + hexadecanoyl-CoA = 1,2-di-(9Z)-octadecenoyl-3-hexadecanoyl-sn-glycerol + CoA. The enzyme catalyses 1,3-di-(9Z-octadecenoyl)-glycerol + (9Z)-octadecenoyl-CoA = 1,2,3-tri-(9Z-octadecenoyl)-glycerol + CoA. It catalyses the reaction 2,3-di-(9Z)-octadecenoyl-sn-glycerol + (9Z)-octadecenoyl-CoA = 1,2,3-tri-(9Z-octadecenoyl)-glycerol + CoA. The catalysed reaction is 2-(9Z-octadecenoyl)-glycerol + hexadecanoyl-CoA = 1-hexadecanoyl-2-(9Z-octadecenoyl)-sn-glycerol + CoA. It functions in the pathway glycerolipid metabolism; triacylglycerol biosynthesis. Inhibited by niacin. Its function is as follows. Essential acyltransferase that catalyzes the terminal and only committed step in triacylglycerol synthesis by using diacylglycerol and fatty acyl CoA as substrates. Required for synthesis and storage of intracellular triglycerides. Probably plays a central role in cytosolic lipid accumulation. In liver, is primarily responsible for incorporating endogenously synthesized fatty acids into triglycerides. Also functions as an acyl-CoA retinol acyltransferase (ARAT). Also able to use 1-monoalkylglycerol (1-MAkG) as an acyl acceptor for the synthesis of monoalkyl-monoacylglycerol (MAMAG). The polypeptide is Diacylglycerol O-acyltransferase 2 (DGAT2) (Bos taurus (Bovine)).